The chain runs to 87 residues: Small ribosomal subunit protein bS20 (87 aa).

The span at M1–A22 shows a compositional bias: basic residues. A disordered region spans residues M1 to M27.

The protein belongs to the bacterial ribosomal protein bS20 family.

Functionally, binds directly to 16S ribosomal RNA. The protein is Small ribosomal subunit protein bS20 of Pectobacterium atrosepticum (strain SCRI 1043 / ATCC BAA-672) (Erwinia carotovora subsp. atroseptica).